A 473-amino-acid polypeptide reads, in one-letter code: MKTLYSPRRYYPVETLFNGTLSVGGRDQETTGFAWWAGNARLINLSGKLLGAHVAHAGLIVFWAGAMNLFEVAHFVPEKPMYEQGLILLPHLASLGWGVGPGGEVIDTFPYFVSGVLHVISSAVLGFGGVYHAIIGPETLEESFPFFGYVWKDKNKMTTILGIHLVLLGFGALLLVAKAVWFGGVYDTWAPGGGDVRVITNPTYDPSIIFGYLLKSPFGGEGWITSVDNMEDIIGGHIWIGFICIFGGIWHIVTKPFAWARRAFVWSGEAYLSYSLGAISAMGFIACCFVWFNNTAYPSEFYGPTGPEASQAQAFTFLVRDQRLGANIGSAQGPTGLGKYLMRSPTGEIIFGGETMRFWDLRAPWLEPLRGPNGLDLSKLKKDIQPWQERRSAEYMTHAPLGSLNSVGGVATEINAVNYVSPRSWLSTSHFVLGFFFFVAHLWHAGRARAAAAGFEKGIERETEPVLFMSPLD.

A propeptide spanning residues 1-14 is cleaved from the precursor; it reads MKTLYSPRRYYPVE. N-acetylthreonine is present on threonine 15. At threonine 15 the chain carries Phosphothreonine. Helical transmembrane passes span 69 to 93, 134 to 155, 178 to 200, 255 to 275, and 291 to 312; these read LFEVAHFVPEKPMYEQGLILLPHLA, IIGPETLEESFPFFGYVWKDKN, KAVWFGGVYDTWAPGGGDVRVIT, KPFAWARRAFVWSGEAYLSYS, and WFNNTAYPSEFYGPTGPEASQA. Residue glutamate 367 participates in [CaMn4O5] cluster binding. The helical transmembrane segment at 447 to 471 threads the bilayer; sequence RARAAAAGFEKGIERETEPVLFMSP.

Belongs to the PsbB/PsbC family. PsbC subfamily. In terms of assembly, PSII is composed of 1 copy each of membrane proteins PsbA, PsbB, PsbC, PsbD, PsbE, PsbF, PsbH, PsbI, PsbJ, PsbK, PsbL, PsbM, PsbT, PsbX, PsbY, PsbZ, Psb30/Ycf12, at least 3 peripheral proteins of the oxygen-evolving complex and a large number of cofactors. It forms dimeric complexes. Binds multiple chlorophylls and provides some of the ligands for the Ca-4Mn-5O cluster of the oxygen-evolving complex. It may also provide a ligand for a Cl- that is required for oxygen evolution. PSII binds additional chlorophylls, carotenoids and specific lipids. is required as a cofactor.

The protein resides in the plastid. It localises to the chloroplast thylakoid membrane. Functionally, one of the components of the core complex of photosystem II (PSII). It binds chlorophyll and helps catalyze the primary light-induced photochemical processes of PSII. PSII is a light-driven water:plastoquinone oxidoreductase, using light energy to abstract electrons from H(2)O, generating O(2) and a proton gradient subsequently used for ATP formation. The chain is Photosystem II CP43 reaction center protein from Chaetosphaeridium globosum (Charophycean green alga).